The chain runs to 363 residues: Anhydro-N-acetylmuramic acid kinase (363 aa).

Residue 10 to 17 (GTSLDGLD) coordinates ATP.

It belongs to the anhydro-N-acetylmuramic acid kinase family.

The enzyme catalyses 1,6-anhydro-N-acetyl-beta-muramate + ATP + H2O = N-acetyl-D-muramate 6-phosphate + ADP + H(+). It functions in the pathway amino-sugar metabolism; 1,6-anhydro-N-acetylmuramate degradation. Its pathway is cell wall biogenesis; peptidoglycan recycling. Functionally, catalyzes the specific phosphorylation of 1,6-anhydro-N-acetylmuramic acid (anhMurNAc) with the simultaneous cleavage of the 1,6-anhydro ring, generating MurNAc-6-P. Is required for the utilization of anhMurNAc either imported from the medium or derived from its own cell wall murein, and thus plays a role in cell wall recycling. Contributes to intrinsic fosfomycin resistance in P.putida. The protein is Anhydro-N-acetylmuramic acid kinase of Pseudomonas putida (strain ATCC 47054 / DSM 6125 / CFBP 8728 / NCIMB 11950 / KT2440).